The chain runs to 241 residues: Pyridoxine 5'-phosphate synthase (241 aa).

N10 serves as a coordination point for 3-amino-2-oxopropyl phosphate. 12 to 13 (DH) serves as a coordination point for 1-deoxy-D-xylulose 5-phosphate. R21 serves as a coordination point for 3-amino-2-oxopropyl phosphate. H48 (proton acceptor) is an active-site residue. 1-deoxy-D-xylulose 5-phosphate-binding residues include R50 and H55. E75 functions as the Proton acceptor in the catalytic mechanism. Position 105 (T105) interacts with 1-deoxy-D-xylulose 5-phosphate. The active-site Proton donor is H195. Residues G196 and 217–218 (GH) each bind 3-amino-2-oxopropyl phosphate.

The protein belongs to the PNP synthase family. Homooctamer; tetramer of dimers.

Its subcellular location is the cytoplasm. It carries out the reaction 3-amino-2-oxopropyl phosphate + 1-deoxy-D-xylulose 5-phosphate = pyridoxine 5'-phosphate + phosphate + 2 H2O + H(+). Its pathway is cofactor biosynthesis; pyridoxine 5'-phosphate biosynthesis; pyridoxine 5'-phosphate from D-erythrose 4-phosphate: step 5/5. Catalyzes the complicated ring closure reaction between the two acyclic compounds 1-deoxy-D-xylulose-5-phosphate (DXP) and 3-amino-2-oxopropyl phosphate (1-amino-acetone-3-phosphate or AAP) to form pyridoxine 5'-phosphate (PNP) and inorganic phosphate. The sequence is that of Pyridoxine 5'-phosphate synthase from Bdellovibrio bacteriovorus (strain ATCC 15356 / DSM 50701 / NCIMB 9529 / HD100).